A 246-amino-acid chain; its full sequence is NH(3)-dependent NAD(+) synthetase (246 aa).

29–36 is a binding site for ATP; it reads GLSGGIDS. Residue Asp-35 coordinates Mg(2+). Position 110 (Arg-110) interacts with deamido-NAD(+). Residue Thr-130 participates in ATP binding. Position 135 (Glu-135) interacts with Mg(2+). Positions 159 and 181 each coordinate ATP.

The protein belongs to the NAD synthetase family. Homodimer.

It carries out the reaction deamido-NAD(+) + NH4(+) + ATP = AMP + diphosphate + NAD(+) + H(+). Its pathway is cofactor biosynthesis; NAD(+) biosynthesis; NAD(+) from deamido-NAD(+) (ammonia route): step 1/1. In terms of biological role, catalyzes the ATP-dependent amidation of deamido-NAD to form NAD. Uses ammonia as a nitrogen source. The polypeptide is NH(3)-dependent NAD(+) synthetase (Campylobacter jejuni subsp. jejuni serotype O:23/36 (strain 81-176)).